The chain runs to 37 residues: uncharacterized protein (37 aa).

A disordered region spans residues 1–37 (MGQVEKARQGQFARPHHSDSQRRVRAWSRIQRRARSF). Residues 23–37 (RVRAWSRIQRRARSF) show a composition bias toward basic residues.

This is an uncharacterized protein from Bacillus phage phi105 (Bacteriophage phi-105).